A 565-amino-acid polypeptide reads, in one-letter code: Dihydroxy-acid dehydratase (565 aa).

Asp80 lines the Mg(2+) pocket. Position 121 (Cys121) interacts with [2Fe-2S] cluster. 2 residues coordinate Mg(2+): Asp122 and Lys123. Lys123 carries the N6-carboxylysine modification. Cys194 contacts [2Fe-2S] cluster. Glu447 contributes to the Mg(2+) binding site. Ser473 acts as the Proton acceptor in catalysis.

This sequence belongs to the IlvD/Edd family. Homodimer. It depends on [2Fe-2S] cluster as a cofactor. Mg(2+) is required as a cofactor.

The catalysed reaction is (2R)-2,3-dihydroxy-3-methylbutanoate = 3-methyl-2-oxobutanoate + H2O. It catalyses the reaction (2R,3R)-2,3-dihydroxy-3-methylpentanoate = (S)-3-methyl-2-oxopentanoate + H2O. It functions in the pathway amino-acid biosynthesis; L-isoleucine biosynthesis; L-isoleucine from 2-oxobutanoate: step 3/4. Its pathway is amino-acid biosynthesis; L-valine biosynthesis; L-valine from pyruvate: step 3/4. Its function is as follows. Functions in the biosynthesis of branched-chain amino acids. Catalyzes the dehydration of (2R,3R)-2,3-dihydroxy-3-methylpentanoate (2,3-dihydroxy-3-methylvalerate) into 2-oxo-3-methylpentanoate (2-oxo-3-methylvalerate) and of (2R)-2,3-dihydroxy-3-methylbutanoate (2,3-dihydroxyisovalerate) into 2-oxo-3-methylbutanoate (2-oxoisovalerate), the penultimate precursor to L-isoleucine and L-valine, respectively. In Pelodictyon phaeoclathratiforme (strain DSM 5477 / BU-1), this protein is Dihydroxy-acid dehydratase.